The primary structure comprises 715 residues: 1,4-alpha-glucan branching enzyme GlgB (715 aa).

The Nucleophile role is filled by Asp-396. Glu-449 acts as the Proton donor in catalysis.

This sequence belongs to the glycosyl hydrolase 13 family. GlgB subfamily. As to quaternary structure, monomer.

The catalysed reaction is Transfers a segment of a (1-&gt;4)-alpha-D-glucan chain to a primary hydroxy group in a similar glucan chain.. Its pathway is glycan biosynthesis; glycogen biosynthesis. In terms of biological role, catalyzes the formation of the alpha-1,6-glucosidic linkages in glycogen by scission of a 1,4-alpha-linked oligosaccharide from growing alpha-1,4-glucan chains and the subsequent attachment of the oligosaccharide to the alpha-1,6 position. In Aliivibrio fischeri (strain ATCC 700601 / ES114) (Vibrio fischeri), this protein is 1,4-alpha-glucan branching enzyme GlgB.